The chain runs to 198 residues: Glycerol-3-phosphate acyltransferase (198 aa).

Transmembrane regions (helical) follow at residues 4 to 24, 71 to 91, 113 to 133, and 147 to 167; these read TYLLFIVAYLLGSIPFALVVG, LPMIFGLDIHPLWFGLAAVLG, LLCYSPVVFAILAVVFFTLLF, and VVAVIASIVSGDKIFIIAMCL.

The protein belongs to the PlsY family. In terms of assembly, probably interacts with PlsX.

Its subcellular location is the cell membrane. The catalysed reaction is an acyl phosphate + sn-glycerol 3-phosphate = a 1-acyl-sn-glycero-3-phosphate + phosphate. It functions in the pathway lipid metabolism; phospholipid metabolism. In terms of biological role, catalyzes the transfer of an acyl group from acyl-phosphate (acyl-PO(4)) to glycerol-3-phosphate (G3P) to form lysophosphatidic acid (LPA). This enzyme utilizes acyl-phosphate as fatty acyl donor, but not acyl-CoA or acyl-ACP. The sequence is that of Glycerol-3-phosphate acyltransferase from Bacillus cereus (strain G9842).